A 273-amino-acid chain; its full sequence is MSIYFISDIHGCYKEFKLLLKKSFFNDKKDFLWIAGDLVSRGPDSLKVIRYLYSLRKRIKIILGNHDLNLIAVYSGVKENKKENYFDEFLSAKDNLQLINWLRCQSILKIDEERKIIMSHAGISPKWDIDTAKKYALEIEKCLSGKNYSSFLRSVFNNKINYWNLNLNKLDRLRYSINVFTRMRYCYPDSRLNLICKKSPNLVKYPLIPWFKIPNKIPKEYSVFFGHWSSLIGTKVPQPFFPLDSGCCWGGKLTMFRWEDKKYFFQSFQKNNS.

The protein belongs to the Ap4A hydrolase family.

It carries out the reaction P(1),P(4)-bis(5'-adenosyl) tetraphosphate + H2O = 2 ADP + 2 H(+). Its function is as follows. Hydrolyzes diadenosine 5',5'''-P1,P4-tetraphosphate to yield ADP. The protein is Bis(5'-nucleosyl)-tetraphosphatase, symmetrical (apaH) of Buchnera aphidicola subsp. Schizaphis graminum (strain Sg).